Reading from the N-terminus, the 545-residue chain is Zinc finger protein 697 (545 aa).

Residues 1–143 (MKQEDNQGVC…EQPAPPVLPW (143 aa)) are disordered. Residue Lys-2 forms a Glycyl lysine isopeptide (Lys-Gly) (interchain with G-Cter in SUMO2) linkage. Acidic residues predominate over residues 23–36 (DFEDSEDREGDPEE). The span at 45-55 (DTNKREGHPEP) shows a compositional bias: basic and acidic residues. Composition is skewed to acidic residues over residues 79–94 (LSEE…EDDQ) and 118–135 (EDDD…EEEQ). C2H2-type zinc fingers lie at residues 189–211 (TICP…QRIH), 261–283 (FRCG…LRLH), 289–311 (NLCA…RRLH), 317–339 (YPCP…RRAH), 353–375 (FACG…QRIH), 381–403 (HGCG…QRVH), 409–431 (YMCS…KRTH), 437–459 (YVCR…LRVH), 465–487 (FRCG…QRTH), 493–515 (YTCI…RRIH), and 521–543 (HKCA…QKLH).

Belongs to the krueppel C2H2-type zinc-finger protein family.

It is found in the nucleus. RNA-interacting protein with a high number of miRNA targets. Acts as a damage-induced regulator of muscle remodeling by mediating the interferon gamma response in muscle cells. This chain is Zinc finger protein 697, found in Homo sapiens (Human).